Reading from the N-terminus, the 443-residue chain is Delta(6)-fatty-acid desaturase fat-3 (443 aa).

The 71-residue stretch at 1–71 (MVVDKNASGL…DLLKKHGEHD (71 aa)) folds into the Cytochrome b5 heme-binding domain. 3 consecutive transmembrane segments (helical) span residues 136-156 (IMAF…ACLL), 296-316 (TIVG…TWPL), and 318-338 (VAYF…VVTF).

Belongs to the fatty acid desaturase type 1 family.

It is found in the membrane. It catalyses the reaction (9Z,12Z)-octadecadienoyl-CoA + 2 Fe(II)-[cytochrome b5] + O2 + 2 H(+) = (6Z,9Z,12Z)-octadecatrienoyl-CoA + 2 Fe(III)-[cytochrome b5] + 2 H2O. The catalysed reaction is (9Z,12Z,15Z)-octadecatrienoyl-CoA + 2 Fe(II)-[cytochrome b5] + O2 + 2 H(+) = (6Z,9Z,12Z,15Z)-octadecatetraenoyl-CoA + 2 Fe(III)-[cytochrome b5] + 2 H2O. The protein operates within lipid metabolism; polyunsaturated fatty acid biosynthesis. Functionally, can function as a Delta(6) fatty acid desaturase. Introduces a double bond in the fatty acid chain 6 carbons away from carboxy terminal to biosynthesize polyunsaturated fatty acids (PUFAs) endogenously (PUFAs are essential for membrane structure and many cellular and physiological processes). Acts on a variety of substrates such as linoleoyl-CoA ((9Z,12Z)-octadecadienoyl-CoA, C18:2n-6) and alpha-linolenoyl-CoA ((9Z,12Z,15Z)-octadecatrienoyl-CoA, C18:3n-3) to produce gamma-linolenoyl-CoA ((6Z,9Z,12Z)-octadecatrienoyl-CoA, C18:3n-6) and (6Z,9Z,12Z,15Z)-octadecatetraenoyl-CoA (18:4n-3) respectively. Unlike plants, Caenorhabditis elegans desaturases seem to use fatty acyl-CoAs as substrates. Plays a role in synaptic vesicle recycling by regulating synaptojanin unc-26 localization at synapses. In Caenorhabditis elegans, this protein is Delta(6)-fatty-acid desaturase fat-3 (fat-3).